The primary structure comprises 278 residues: S-formylglutathione hydrolase YeiG (278 aa).

Catalysis depends on charge relay system residues S145, D223, and H256.

This sequence belongs to the esterase D family.

It carries out the reaction S-formylglutathione + H2O = formate + glutathione + H(+). In terms of biological role, serine hydrolase involved in the detoxification of formaldehyde. Hydrolyzes S-formylglutathione to glutathione and formate. The sequence is that of S-formylglutathione hydrolase YeiG (yeiG) from Escherichia coli O6:K15:H31 (strain 536 / UPEC).